We begin with the raw amino-acid sequence, 66 residues long: Large ribosomal subunit protein bL33c (66 aa).

It belongs to the bacterial ribosomal protein bL33 family.

It is found in the plastid. It localises to the chloroplast. This Dioscorea elephantipes (Elephant's foot yam) protein is Large ribosomal subunit protein bL33c.